The chain runs to 311 residues: Formimidoylglutamase (311 aa).

Positions 122, 151, 153, 155, 242, and 244 each coordinate Mn(2+).

It belongs to the arginase family. Requires Mn(2+) as cofactor.

It catalyses the reaction N-formimidoyl-L-glutamate + H2O = formamide + L-glutamate. The protein operates within amino-acid degradation; L-histidine degradation into L-glutamate; L-glutamate from N-formimidoyl-L-glutamate (hydrolase route): step 1/1. Functionally, catalyzes the conversion of N-formimidoyl-L-glutamate to L-glutamate and formamide. The polypeptide is Formimidoylglutamase (Pseudomonas aeruginosa (strain UCBPP-PA14)).